The primary structure comprises 504 residues: Histidine ammonia-lyase (504 aa).

Residues 142-144 (ASG) constitute a cross-link (5-imidazolinone (Ala-Gly)). Position 143 is a 2,3-didehydroalanine (Ser) (Ser143).

It belongs to the PAL/histidase family. Contains an active site 4-methylidene-imidazol-5-one (MIO), which is formed autocatalytically by cyclization and dehydration of residues Ala-Ser-Gly.

It is found in the cytoplasm. It carries out the reaction L-histidine = trans-urocanate + NH4(+). The protein operates within amino-acid degradation; L-histidine degradation into L-glutamate; N-formimidoyl-L-glutamate from L-histidine: step 1/3. In Staphylococcus aureus (strain MSSA476), this protein is Histidine ammonia-lyase.